The following is a 396-amino-acid chain: Phosphoglycerate kinase (396 aa).

Substrate contacts are provided by residues 21 to 23 (DFN), arginine 36, 59 to 62 (HLGR), arginine 118, and arginine 151. Residues lysine 201, glycine 292, glutamate 323, and 349 to 352 (GGDS) contribute to the ATP site.

The protein belongs to the phosphoglycerate kinase family. In terms of assembly, monomer.

It localises to the cytoplasm. It carries out the reaction (2R)-3-phosphoglycerate + ATP = (2R)-3-phospho-glyceroyl phosphate + ADP. Its pathway is carbohydrate degradation; glycolysis; pyruvate from D-glyceraldehyde 3-phosphate: step 2/5. The polypeptide is Phosphoglycerate kinase (Leptospira interrogans serogroup Icterohaemorrhagiae serovar Lai (strain 56601)).